Here is a 406-residue protein sequence, read N- to C-terminus: Outer membrane protein assembly factor BamB (406 aa).

Residues 1 to 23 (MMKQVDMYKRVALIALMGMSLAG) form the signal peptide. Cys24 carries N-palmitoyl cysteine lipidation. Cys24 is lipidated: S-diacylglycerol cysteine.

This sequence belongs to the BamB family. In terms of assembly, part of the Bam complex.

It localises to the cell outer membrane. Its function is as follows. Part of the outer membrane protein assembly complex, which is involved in assembly and insertion of beta-barrel proteins into the outer membrane. The chain is Outer membrane protein assembly factor BamB from Xanthomonas campestris pv. campestris (strain ATCC 33913 / DSM 3586 / NCPPB 528 / LMG 568 / P 25).